A 343-amino-acid polypeptide reads, in one-letter code: 4-hydroxy-2-oxovalerate aldolase (343 aa).

Positions 4–254 constitute a Pyruvate carboxyltransferase domain; that stretch reads PRLTDTTLRD…NPGLDVFGLM (251 aa). 12-13 lines the substrate pocket; sequence RD. Asp13 lines the Mn(2+) pocket. The active-site Proton acceptor is His16. The substrate site is built by Ser166 and His193. 2 residues coordinate Mn(2+): His193 and His195. Residue Tyr284 participates in substrate binding.

The protein belongs to the 4-hydroxy-2-oxovalerate aldolase family.

The catalysed reaction is (S)-4-hydroxy-2-oxopentanoate = acetaldehyde + pyruvate. This is 4-hydroxy-2-oxovalerate aldolase from Chloroflexus aggregans (strain MD-66 / DSM 9485).